Consider the following 522-residue polypeptide: Serine/threonine protein phosphatase 2A 59 kDa regulatory subunit B' gamma isoform (522 aa).

A disordered region spans residues 1–74; it reads MIKQIFGKLP…SSTSSNRTNQ (74 aa). Positions 35-58 are enriched in low complexity; it reads PNSGISSISKPSSKSSASNSNGAN. Residues 63–74 are compositionally biased toward polar residues; sequence APSSTSSNRTNQ.

This sequence belongs to the phosphatase 2A regulatory subunit B56 family. As to quaternary structure, PP2A consists of a common heteromeric enzyme, composed of a catalytic subunit (subunits C), a constant regulatory subunit (subunit A), and a variety of regulatory subunits such as subunits B (the R2/B/PR55/B55, R3/B''/PR72/PR130/PR59 and R5/B'/B56 families). Interacts with BRI1. Interacts with IGMT1 and IGMT4. Interacts with ACO3 in the cytosol. In terms of tissue distribution, expressed ubiquitously at low levels. Expressed in roots, emerging lateral roots, cotyledons, leaves, floral stalks and flowers.

It localises to the cytoplasm. Its subcellular location is the cytosol. It is found in the nucleus. In terms of biological role, the B regulatory subunit may modulate substrate selectivity and catalytic activity, and may also direct the localization of the catalytic enzyme to a particular subcellular compartment. Required for the formation of the PP2A holoenzyme that negatively regulates brassinosteroid signaling by dephosphorylating and inactivating BRI1 in the cytoplasm. Seems to be functionally connected with CPR5 and may mediate the negative regulation of defense reactions and senescence under low irradiances. May contribute to the epigenetic regulation of defense gene expression. Involved in the control of methoxylation of indole glucosinolates and formation of 4-methoxy- indol-3-yl-methyl glucosinolate in leaves, through direct interaction with indole glucosinolate methyltransferases. Involved in growth regulation and stress signaling. Involved in the regulation of reactive oxygen species (ROS) signaling and maintenance of cellular ROS homeostasis. Required to control the level of ACO3 phosphorylation in the cytoplasm. Regulates hydrogen peroxide metabolism by controlling the abundance of AOX1A and AXO3/AOX1D in leaf mitochondria. May mediate dephosphorylation of CRT1 and promote the degradation of unfolded proteins in endoplasmic reticulum (ER). Involved in the regulation of flowering time by repressing FLC, the main flowering repressor gene. In Arabidopsis thaliana (Mouse-ear cress), this protein is Serine/threonine protein phosphatase 2A 59 kDa regulatory subunit B' gamma isoform (B'GAMMA).